Here is a 589-residue protein sequence, read N- to C-terminus: Outer envelope protein 64, chloroplastic (589 aa).

Position 1 (M1) is a topological domain, chloroplast intermembrane. The chain crosses the membrane as a helical span at residues 2 to 22; sequence ASQAANLWVLLGLGLAGILML. Residues 23–141 lie on the Cytoplasmic side of the membrane; it reads TKKLKKTVRE…NPAAPTRIPG (119 aa). The helical transmembrane segment at 142 to 162 threads the bilayer; it reads GACSGAAVAVATNAVDFALGI. Residues 163–398 are Chloroplast intermembrane-facing; the sequence is DTVGGVRVPA…EITSEDYQNR (236 aa). A helical transmembrane segment spans residues 399–419; that stretch reads ASSLLSIASISGCCQVTVPLG. The Cytoplasmic portion of the chain corresponds to 420 to 589; the sequence is HHEKCPISVS…LSAERLRKFQ (170 aa). 3 TPR repeats span residues 474–507, 508–541, and 542–575; these read AEIAKEKGNQAFKEKLWQKAIGLYSEAIKLSDNN, ATYYSNRAAAYLELGGFLQAEEDCTKAITLDKKN, and VKAYLRRGTAREMLGDCKGAIEDFRYALVLEPNN.

Part of the Toc complex and of the intermembrane space complex. As to expression, expressed in roots, cotyledons, leaves and flower buds.

It localises to the plastid. It is found in the chloroplast outer membrane. In terms of biological role, chaperone receptor mediating Hsp90-dependent protein targeting to chloroplasts. Bi-functional preprotein receptor acting on both sides of the membrane. Not essential for an efficient import of pre-proteins into plastids. The chain is Outer envelope protein 64, chloroplastic (OEP64) from Arabidopsis thaliana (Mouse-ear cress).